Consider the following 575-residue polypeptide: Septation ring formation regulator EzrA (575 aa).

Over 1–8 (MSNGQLIY) the chain is Extracellular. A helical transmembrane segment spans residues 9 to 27 (LMVAIAVILVLAYVVAIFL). At 28–575 (RKRNEGRLEA…YEKTRETIRF (548 aa)) the chain is on the cytoplasmic side. 4 coiled-coil regions span residues 110–191 (QIDQ…FVTL), 265–301 (LYEA…LYDI), 354–416 (VRRI…IEKD), and 456–526 (TASN…IQEA).

The protein belongs to the EzrA family.

It localises to the cell membrane. Negative regulator of FtsZ ring formation; modulates the frequency and position of FtsZ ring formation. Inhibits FtsZ ring formation at polar sites. Interacts either with FtsZ or with one of its binding partners to promote depolymerization. This chain is Septation ring formation regulator EzrA, found in Streptococcus pneumoniae (strain JJA).